The primary structure comprises 258 residues: PHD finger protein ALFIN-LIKE 1 (258 aa).

Residues 1 to 10 (MDASYRRDGR) are compositionally biased toward basic and acidic residues. Disordered regions lie at residues 1-24 (MDAS…SAPR) and 150-200 (SGSR…DGDH). Residues 11–21 (GGGGGGGGGGS) are compositionally biased toward gly residues. Basic and acidic residues predominate over residues 175–187 (HTSDVARVENNIK). Over residues 188–199 (EEDEGYDEDDGD) the composition is skewed to acidic residues. The segment at 202–254 (ETLCGTCGGIYSADEFWIGCDVCERWYHGKCVKITPAKAESIKQYKCPSCSSK) adopts a PHD-type zinc-finger fold.

Belongs to the Alfin family. As to quaternary structure, interacts with H3K4me3 and to a lesser extent with H3K4me2.

The protein localises to the nucleus. Functionally, histone-binding component that specifically recognizes H3 tails trimethylated on 'Lys-4' (H3K4me3), which mark transcription start sites of virtually all active genes. The protein is PHD finger protein ALFIN-LIKE 1 of Oryza sativa subsp. indica (Rice).